A 554-amino-acid chain; its full sequence is Glucose-6-phosphate isomerase (554 aa).

The Proton donor role is filled by Glu359. Catalysis depends on residues His390 and Lys518.

This sequence belongs to the GPI family.

It localises to the cytoplasm. The enzyme catalyses alpha-D-glucose 6-phosphate = beta-D-fructose 6-phosphate. The protein operates within carbohydrate biosynthesis; gluconeogenesis. It functions in the pathway carbohydrate degradation; glycolysis; D-glyceraldehyde 3-phosphate and glycerone phosphate from D-glucose: step 2/4. Catalyzes the reversible isomerization of glucose-6-phosphate to fructose-6-phosphate. This is Glucose-6-phosphate isomerase from Pseudomonas putida (strain W619).